We begin with the raw amino-acid sequence, 610 residues long: MSDQFDAKAFLKTVTSQPGVYRMYDAGGTVIYVGKAKDLKKRLSSYFRSNLASRKTEALVAQIQQIDVTVTHTETEALLLEHNYIKLYQPRYNVLLRDDKSYPFIFLSGDTHPRLAMHRGAKHAKGEYFGPFPNGYAVRETLALLQKIFPIRQCENSVYRNRSRPCLQYQIGRCLGPCVEGLVSEEEYAQQVEYVRLFLSGKDDQVLTQLISRMETASQNLEFEEAARIRDQIQAVRRVTEKQFVSNTGDDLDVIGVAFDAGMACVHVLFIRQGKVLGSRSYFPKVPGSTELSEVVETFVGQFYLQGSQMRTLPGEILLDFNLSDKTLLADSLSELAGRKINVQTKPRGDRARYLKLARTNAATALTSKLSQQSTVHQRLTALASVLKLPEVKRMECFDISHTMGEQTVASCVVFDANGPLRAEYRRYNITGITPGDDYAAMHQVLRRRYGKAIDDSKIPDVILIDGGKGQLAQAKNVFAELDVSWDKNHPLLLGVAKGADRKAGLETLFFEPEGEGFSLPPDSPALHVIQHIRDESHDHAIGGHRKKRAKVKNTSSLETIEGIGPKRRQMLLKYMGGLQGLRNASVEEIAKVPGISQGLAEKIFWSLKH.

The region spanning 16–94 (SQPGVYRMYD…IKLYQPRYNV (79 aa)) is the GIY-YIG domain. Positions 204–239 (DQVLTQLISRMETASQNLEFEEAARIRDQIQAVRRV) constitute a UVR domain.

It belongs to the UvrC family. In terms of assembly, interacts with UvrB in an incision complex.

The protein localises to the cytoplasm. In terms of biological role, the UvrABC repair system catalyzes the recognition and processing of DNA lesions. UvrC both incises the 5' and 3' sides of the lesion. The N-terminal half is responsible for the 3' incision and the C-terminal half is responsible for the 5' incision. In Escherichia coli O45:K1 (strain S88 / ExPEC), this protein is UvrABC system protein C.